Here is a 311-residue protein sequence, read N- to C-terminus: Ornithine carbamoyltransferase (311 aa).

Carbamoyl phosphate-binding positions include Ser-56–Thr-59, Gln-83, Arg-107, and His-134–Gln-137. Residues Asn-166, Asp-230, and Ser-234–Met-235 contribute to the L-ornithine site. Carbamoyl phosphate-binding positions include Cys-270 to Leu-271 and Lys-298.

Belongs to the aspartate/ornithine carbamoyltransferase superfamily. OTCase family.

It localises to the cytoplasm. The catalysed reaction is carbamoyl phosphate + L-ornithine = L-citrulline + phosphate + H(+). Its pathway is amino-acid degradation; L-arginine degradation via ADI pathway; carbamoyl phosphate from L-arginine: step 2/2. Reversibly catalyzes the transfer of the carbamoyl group from carbamoyl phosphate (CP) to the N(epsilon) atom of ornithine (ORN) to produce L-citrulline. This chain is Ornithine carbamoyltransferase, found in Ignicoccus hospitalis (strain KIN4/I / DSM 18386 / JCM 14125).